The sequence spans 225 residues: Protein-L-isoaspartate O-methyltransferase (225 aa).

Residue Ser75 is part of the active site.

The protein belongs to the methyltransferase superfamily. L-isoaspartyl/D-aspartyl protein methyltransferase family.

It is found in the cytoplasm. The enzyme catalyses [protein]-L-isoaspartate + S-adenosyl-L-methionine = [protein]-L-isoaspartate alpha-methyl ester + S-adenosyl-L-homocysteine. Functionally, catalyzes the methyl esterification of L-isoaspartyl residues in peptides and proteins that result from spontaneous decomposition of normal L-aspartyl and L-asparaginyl residues. It plays a role in the repair and/or degradation of damaged proteins. The chain is Protein-L-isoaspartate O-methyltransferase from Xanthomonas campestris pv. campestris (strain 8004).